The primary structure comprises 120 residues: NAD(P)H-quinone oxidoreductase subunit 3, chloroplastic (120 aa).

The next 3 helical transmembrane spans lie at 9-29 (IFWA…FISG), 64-84 (MFAL…PWAM), and 88-108 (VLGV…IVGL).

The protein belongs to the complex I subunit 3 family. In terms of assembly, NDH is composed of at least 16 different subunits, 5 of which are encoded in the nucleus.

The protein localises to the plastid. It localises to the chloroplast thylakoid membrane. It carries out the reaction a plastoquinone + NADH + (n+1) H(+)(in) = a plastoquinol + NAD(+) + n H(+)(out). The enzyme catalyses a plastoquinone + NADPH + (n+1) H(+)(in) = a plastoquinol + NADP(+) + n H(+)(out). NDH shuttles electrons from NAD(P)H:plastoquinone, via FMN and iron-sulfur (Fe-S) centers, to quinones in the photosynthetic chain and possibly in a chloroplast respiratory chain. The immediate electron acceptor for the enzyme in this species is believed to be plastoquinone. Couples the redox reaction to proton translocation, and thus conserves the redox energy in a proton gradient. This is NAD(P)H-quinone oxidoreductase subunit 3, chloroplastic from Guizotia abyssinica (Niger).